Reading from the N-terminus, the 475-residue chain is Kynureninase (475 aa).

Pyridoxal 5'-phosphate contacts are provided by residues Leu-141, Thr-142, 169–172 (FPSD), Asp-254, His-257, and Tyr-279. Lys-280 bears the N6-(pyridoxal phosphate)lysine mark. 2 residues coordinate pyridoxal 5'-phosphate: Trp-319 and Asn-347.

This sequence belongs to the kynureninase family. Homodimer. Pyridoxal 5'-phosphate is required as a cofactor.

It is found in the cytoplasm. The catalysed reaction is L-kynurenine + H2O = anthranilate + L-alanine + H(+). The enzyme catalyses 3-hydroxy-L-kynurenine + H2O = 3-hydroxyanthranilate + L-alanine + H(+). The protein operates within amino-acid degradation; L-kynurenine degradation; L-alanine and anthranilate from L-kynurenine: step 1/1. Its pathway is cofactor biosynthesis; NAD(+) biosynthesis; quinolinate from L-kynurenine: step 2/3. In terms of biological role, catalyzes the cleavage of L-kynurenine (L-Kyn) and L-3-hydroxykynurenine (L-3OHKyn) into anthranilic acid (AA) and 3-hydroxyanthranilic acid (3-OHAA), respectively. The chain is Kynureninase (bna5) from Sclerotinia sclerotiorum (strain ATCC 18683 / 1980 / Ss-1) (White mold).